A 76-amino-acid polypeptide reads, in one-letter code: MKAWMIILLVICVAVVVEQSEARKGRKYLNPGVLDRCRGPNPPAGCHPHNSHHKPRVPVHNYSRGCSRITRCRRDA.

The N-terminal stretch at 1–22 is a signal peptide; the sequence is MKAWMIILLVICVAVVVEQSEA. A disulfide bridge links cysteine 37 with cysteine 46. Asparagine 61 is a glycosylation site (N-linked (GlcNAc...) asparagine). Cysteines 66 and 72 form a disulfide.

This sequence belongs to the plant rapid alkalinization factor (RALF) family.

The protein resides in the secreted. In terms of biological role, cell signaling peptide that may regulate plant stress, growth, and development. Mediates a rapid alkalinization of extracellular space by mediating a transient increase in the cytoplasmic Ca(2+) concentration leading to a calcium-dependent signaling events through a cell surface receptor and a concomitant activation of some intracellular mitogen-activated protein kinases. This Arabidopsis thaliana (Mouse-ear cress) protein is Protein RALF-like 26 (RALFL26).